The primary structure comprises 205 residues: Large ribosomal subunit protein uL3 (205 aa).

Belongs to the universal ribosomal protein uL3 family. As to quaternary structure, part of the 50S ribosomal subunit. Forms a cluster with proteins L14 and L19.

Functionally, one of the primary rRNA binding proteins, it binds directly near the 3'-end of the 23S rRNA, where it nucleates assembly of the 50S subunit. The sequence is that of Large ribosomal subunit protein uL3 from Parabacteroides distasonis (strain ATCC 8503 / DSM 20701 / CIP 104284 / JCM 5825 / NCTC 11152).